The following is a 401-amino-acid chain: MASILSRMGNSRGQNSPLPPWAHSMLRSLGRSLGPLMASMAERNMKLFSGRAEPAQGEETFENWLSQVTAVLPDWHMPEEEKVRRLMRTLRGPAREVMRLLQAANPCLDVEDFLRAMKLVFGESESSVTAHSKFVNTVQEPGEKPSLYVIRLEVQLQNAIQAGVFAEREANQARLHQLLVGAEMSTDLRFRLKSLLRVYANEPERLPNFLELIRMIREEEEWEEAFIHPKRPRRSQSVERALSPTFQSSPPVMISSIDCNVIEIDDSPDDSDEDVILVEPDDPPLPSSSAGPSFLGRAVSEDQVLVIESPNIFEIQAPSTSSGAGRKNNNNFGELRRARKRKHTVHCSHCGEEGHSKETCDNESDRGQVFENLIITLQELTHTEERAREIFGEAIGLSELH.

Disordered stretches follow at residues 1-20 (MASILSRMGNSRGQNSPLPP) and 270-292 (DSDEDVILVEPDDPPLPSSSAGP). Positions 270 to 282 (DSDEDVILVEPDD) are enriched in acidic residues. The segment at 345 to 362 (VHCSHCGEEGHSKETCDN) adopts a CCHC-type zinc-finger fold.

The protein belongs to the ZCCHC12 family. Interacts with SMAD1 and CREB-binding protein (CBP). Forms a protein-DNA complex through its association with SMAD1.

Functionally, transcriptional coactivator in the bone morphogenetic protein (BMP)-signaling pathway. It positively modulates BMP signaling by interacting with SMAD1 and associating with CBP in the transcription complex. It contributes to the BMP-induced enhancement of cholinergic-neuron-specific gene expression. The protein is Zinc finger CCHC domain-containing protein 12 (Zcchc12) of Rattus norvegicus (Rat).